The chain runs to 278 residues: HTH-type transcriptional activator RhaS (278 aa).

The HTH araC/xylS-type domain maps to 174–272 (NLLLAWLEDH…NWSPRDIRQG (99 aa)). 2 DNA-binding regions (H-T-H motif) span residues 191–212 (DAVA…KQQT) and 239–262 (VTDI…RREF).

As to quaternary structure, binds DNA as a dimer.

Its subcellular location is the cytoplasm. Its function is as follows. Activates expression of the rhaBAD and rhaT operons. This chain is HTH-type transcriptional activator RhaS, found in Shigella dysenteriae serotype 1 (strain Sd197).